A 59-amino-acid chain; its full sequence is Putative potassium channel toxin Ts24 (59 aa).

The signal sequence occupies residues 1–22 (MKAFYGILIIFILISMIHLSQQ). 3 disulfide bridges follow: Cys-29–Cys-50, Cys-35–Cys-55, and Cys-39–Cys-57.

Belongs to the short scorpion toxin superfamily. Potassium channel inhibitor family. Alpha-KTx 04 subfamily. As to expression, expressed by the venom gland.

It localises to the secreted. Its function is as follows. Potently blocks Kv1.1/KCNA1 (85%), Kv1.2/KCNA2 (91%), Kv1.3/KCNA3 (89%), Kv1.6/KCNA6 (94%), and Shaker (97%). The polypeptide is Putative potassium channel toxin Ts24 (Tityus serrulatus (Brazilian scorpion)).